The chain runs to 290 residues: MSLTTPDKAQVLADALPWLTALNGKIVVVKYGGNAMTDDRLKAAFAADMVFLRNCGIHPVVVHGGGPQISAMLKKLGIAGDFKGGFRVTTPEVLEVARMVLFGQVGRELVNLINAYGPYAVGITGEDAHLFTAVRRTVMVDGVATDIGLVGDVERVNTDAVLDLIDAGRIPVVSTIAPDTAGLVYNINADTAAAALAEALGAEKLLMLTDVEGLYTDWPDRGSLVNQINSDALAELLPTLEEGMVPKIEACLRAIDGGVPSAHVIDGRVEHCVLVELFTNEGAGTKVVRS.

Substrate contacts are provided by residues 65–66 (GG), Arg87, and Asn186.

It belongs to the acetylglutamate kinase family. ArgB subfamily.

Its subcellular location is the cytoplasm. It catalyses the reaction N-acetyl-L-glutamate + ATP = N-acetyl-L-glutamyl 5-phosphate + ADP. Its pathway is amino-acid biosynthesis; L-arginine biosynthesis; N(2)-acetyl-L-ornithine from L-glutamate: step 2/4. Its function is as follows. Catalyzes the ATP-dependent phosphorylation of N-acetyl-L-glutamate. The sequence is that of Acetylglutamate kinase from Mycolicibacterium gilvum (strain PYR-GCK) (Mycobacterium gilvum (strain PYR-GCK)).